The chain runs to 428 residues: Immunoglobulin superfamily containing leucine-rich repeat protein (428 aa).

The signal sequence occupies residues 1–18; the sequence is MQELHLLWWALLLGLAQA. One can recognise an LRRNT domain in the interval 19 to 50; sequence CPEPCDCGEKYGFQIADCAYRDLEAVPPGFPA. N-linked (GlcNAc...) asparagine glycosylation is present at asparagine 51. LRR repeat units follow at residues 51–72, 75–96, 99–122, 123–144, and 147–168; these read NVTA…AFRE, LLQS…ALAS, HLKS…HNLS, ALQL…AFRS, and ALRS…TFTP. The 52-residue stretch at 180 to 231 folds into the LRRCT domain; that stretch reads NPFDCTCGIVWLKTWALATAVSIPEQDNIACTSPHVLKGTPLSRLPPLPCSA. In terms of domain architecture, Ig-like spans 232 to 343; the sequence is PSVQLSYQPS…GSAESSVDVA (112 aa). Cysteine 257 and cysteine 327 are oxidised to a cystine. The N-linked (GlcNAc...) asparagine glycan is linked to asparagine 309.

It is found in the secreted. The chain is Immunoglobulin superfamily containing leucine-rich repeat protein (ISLR) from Pongo abelii (Sumatran orangutan).